The following is a 754-amino-acid chain: Circadian input-output histidine kinase CikA (754 aa).

The tract at residues 1 to 183 (MLAPSSNCSL…QVSAQIRLSL (183 aa)) is N-terminal domain, not required to complement the deletion strain. The segment at 184–338 (DLSEILTTTI…RDILQHLAEH (155 aa)) is GAF domain, required to complement the deletion strain. Positions 390 to 611 (TMSHELRTPL…TFTVWIPEQT (222 aa)) constitute a Histidine kinase domain. Phosphohistidine; by autocatalysis is present on H393. The interval 606–754 (WIPEQTLIEP…NLSEGDRPSS (149 aa)) is psR domain, required to complement the deletion strain and for cell pole localization, attenuates autophosphorylation activity. Binds KaiB(fs). The region spanning 629-742 (HILLLEEEDE…LLLTTLQGLC (114 aa)) is the Response regulatory domain.

In the N-terminal section; belongs to the phytochrome family. In terms of assembly, homodimer. Part of the circadian clock (KaiA, KaiB, KaiC, CikA, RpaA, SasA), the composition of which varies during the circadian cycle. Interacts with LdpA. KaiA and CikA compete for binding to KaiB(fs).

The protein resides in the cytoplasm. The protein localises to the membrane. The catalysed reaction is ATP + protein L-histidine = ADP + protein N-phospho-L-histidine.. In terms of biological role, functions in an input pathway to the Kai circadian clock. Senses oxidized quinones via its C-terminal pseudo-receiver domain, providing a link between cell metabolism and the clock. Affects the ratio of phosphorylated to unphosphorylated KaiC, binds quinones via its pseudo-receptor domain. Quinone-binding destabilizes the protein rapidly. Autophosphorylates, does not transfer the phosphate to its pseudo-receiver (PsR) domain. May play a role in cell division, as suggested by its polar location and increased cell length in a deletion strain. Member of the two-component regulatory system CikA/RpaA output pathway from the circadian clock, negatively regulating kaiBC expression independently of labA and of sasA. One of three clock output pathways. Dephosphorylates phospho-RpaA, enhanced by KaiB and KaiC, has only modest kinase activity on RpaA. A very robust clock is reconstituted with KaiA, KaiB, KaiC, SasA, CikA and RpaA; output is measured by transcription from an appropriate reporter. In Synechococcus elongatus (strain ATCC 33912 / PCC 7942 / FACHB-805) (Anacystis nidulans R2), this protein is Circadian input-output histidine kinase CikA.